We begin with the raw amino-acid sequence, 467 residues long: ESX-4 secretion system protein eccD4 (467 aa).

Helical transmembrane passes span Gly122–Leu142, Ala152–Cys172, Val186–Val206, Val209–Cys229, Ala241–Ile261, Leu264–Ala284, Leu319–Val339, Ile344–Leu364, Ser374–Asp394, Pro401–Ala421, and Cys439–Val459.

Belongs to the EccD/Snm4 family. In terms of assembly, part of the ESX-4 / type VII secretion system (T7SS), which is composed of cytosolic and membrane components.

The protein resides in the cell membrane. The protein is ESX-4 secretion system protein eccD4 (eccD4) of Mycobacterium tuberculosis (strain CDC 1551 / Oshkosh).